Here is a 410-residue protein sequence, read N- to C-terminus: Magnesium transporter NIPA3 (410 aa).

Residues 1 to 67 (MGAQVRLPPG…ISANVENKYS (67 aa)) are Extracellular-facing. Asparagine 25, asparagine 35, and asparagine 50 each carry an N-linked (GlcNAc...) asparagine glycan. The helical transmembrane segment at 68-88 (LYVGLVLAVSSSIFIGSSFIL) threads the bilayer. At 89 to 114 (KKKGLLQLASKGITRAGQGGHSYLKE) the chain is on the cytoplasmic side. Residues 115 to 135 (WLWWVGLLSMGVGEAANFAAY) form a helical membrane-spanning segment. Residue alanine 136 is a topological domain, extracellular. The chain crosses the membrane as a helical span at residues 137–157 (FAPATLVTPLGALSVLISAIL). Over 158–165 (SSYFLNEH) the chain is Cytoplasmic. A helical transmembrane segment spans residues 166 to 186 (LNIHGKIGCILSILGSTVMVI). Topologically, residues 187-207 (HAPQEEEVTSLHEMEMKLRDP) are extracellular. Residues 208–228 (GFISFAVIVTVISLVLILIVA) traverse the membrane as a helical segment. Topologically, residues 229–233 (PKKGQ) are cytoplasmic. The helical transmembrane segment at 234 to 254 (TNILVYISICSLIGAFSVSSV) threads the bilayer. Residues 255–273 (KGLGIAIKELIEWKPVYKH) are Extracellular-facing. The chain crosses the membrane as a helical span at residues 274 to 294 (PLVFVLLAVLVLSVTTQINYL). The Cytoplasmic segment spans residues 295–304 (NKALDTFNTS). Residues 305–325 (IVTPIYYVFFTSMVVTCSAIL) traverse the membrane as a helical segment. At 326 to 336 (FQEWYGMTAGD) the chain is on the extracellular side. The chain crosses the membrane as a helical span at residues 337–357 (IIGTLSGFFTIIIGIFLLHAF). At 358–410 (KNTDITWSELTSTAKKEAVSLNVSENNYVLLENLECSAPGYNDDVTLFSRTDD) the chain is on the cytoplasmic side.

This sequence belongs to the NIPA family.

It is found in the golgi apparatus membrane. The catalysed reaction is Mg(2+)(in) = Mg(2+)(out). Functionally, acts as a Mg(2+) transporter. Can also transport other divalent cations such as Fe(2+), Sr(2+), Ba(2+), Mn(2+), Cu(2+) and Co(2+) but to a much less extent than Mg(2+). This chain is Magnesium transporter NIPA3 (NIPAL1), found in Pongo abelii (Sumatran orangutan).